The sequence spans 149 residues: Putative sugar phosphate isomerase YwlF (149 aa).

Histidine 9 is a binding site for substrate. Cysteine 66 (proton acceptor) is an active-site residue. 67–72 lines the substrate pocket; sequence GTGIGM. Catalysis depends on histidine 99, which acts as the Proton donor. Arginine 133 contacts substrate.

This sequence belongs to the LacAB/RpiB family.

The protein is Putative sugar phosphate isomerase YwlF (ywlF) of Bacillus subtilis (strain 168).